The sequence spans 312 residues: Coproporphyrin III ferrochelatase (312 aa).

Fe-coproporphyrin III contacts are provided by residues tyrosine 13, arginine 30, 46-47 (RY), serine 54, and tyrosine 125. Fe(2+)-binding residues include histidine 183 and glutamate 264.

This sequence belongs to the ferrochelatase family.

The protein localises to the cytoplasm. It catalyses the reaction Fe-coproporphyrin III + 2 H(+) = coproporphyrin III + Fe(2+). It functions in the pathway porphyrin-containing compound metabolism; protoheme biosynthesis. Functionally, involved in coproporphyrin-dependent heme b biosynthesis. Catalyzes the insertion of ferrous iron into coproporphyrin III to form Fe-coproporphyrin III. The polypeptide is Coproporphyrin III ferrochelatase (Bacillus pumilus (strain SAFR-032)).